A 188-amino-acid polypeptide reads, in one-letter code: MRVYNCHFCSSPVYPGKGIMFVRNDSKEFRFCRSKCHKNFKMKRNPRKLRWTKAFRKAAGKEMVVDSTLAFSARRDVPVRYNRDLVEKTLEAMEKVEEIRLKRERAFYKNRMRGNKAAQLEEDRKLVEAHPELLREREVELRRMQEAGEDDDDEDMSEMEVSEEEESEEEREKVEIALKSKSKRKMRA.

A disordered region spans residues 140–188 (ELRRMQEAGEDDDDEDMSEMEVSEEEESEEEREKVEIALKSKSKRKMRA). Residues 147-169 (AGEDDDDEDMSEMEVSEEEESEE) show a composition bias toward acidic residues.

This sequence belongs to the eukaryotic ribosomal protein eL24 family. As to quaternary structure, associated with nucleolar and cytoplasmic pre-60S particles. At the end of biogenesis it dissociates from cytoplasmic pre-60S particles and is likely to be exchanged for its ribosomal homolog, RPL24.

The protein resides in the cytoplasm. Its subcellular location is the nucleus. Involved in the biogenesis of the 60S ribosomal subunit. Ensures the docking of YALI0_B00990g/NOG1 to pre-60S particles. Activates and recruits ATPase AFG2 to cytoplasmic pre-60S ribosomal particles. This is Ribosome biogenesis protein RLP24 (RLP24) from Yarrowia lipolytica (strain CLIB 122 / E 150) (Yeast).